The primary structure comprises 394 residues: Probable fimbrial assembly protein FimD, serogroup H1 (394 aa).

This is Probable fimbrial assembly protein FimD, serogroup H1 (fimD) from Dichelobacter nodosus (Bacteroides nodosus).